The sequence spans 221 residues: Adenylate kinase (221 aa).

10 to 15 (GAGKGT) lines the ATP pocket. Residues 30 to 59 (STGDMLRAAVKAGTPLGIEAKKVMDAGGLV) form an NMP region. AMP is bound by residues threonine 31, arginine 36, 57-59 (GLV), 85-88 (GFPR), and glutamine 92. Residues 122 to 159 (GRRVHVASGRTYHVKFNPPKADMVDDETGEALIQRDDD) are LID. ATP-binding positions include arginine 123 and 132–133 (TY). Positions 156 and 167 each coordinate AMP. Glycine 207 lines the ATP pocket.

Belongs to the adenylate kinase family. In terms of assembly, monomer.

The protein resides in the cytoplasm. It catalyses the reaction AMP + ATP = 2 ADP. It functions in the pathway purine metabolism; AMP biosynthesis via salvage pathway; AMP from ADP: step 1/1. Functionally, catalyzes the reversible transfer of the terminal phosphate group between ATP and AMP. Plays an important role in cellular energy homeostasis and in adenine nucleotide metabolism. This chain is Adenylate kinase, found in Cupriavidus metallidurans (strain ATCC 43123 / DSM 2839 / NBRC 102507 / CH34) (Ralstonia metallidurans).